A 162-amino-acid chain; its full sequence is Ribosome maturation factor RimP (162 aa).

The protein belongs to the RimP family.

Its subcellular location is the cytoplasm. In terms of biological role, required for maturation of 30S ribosomal subunits. The protein is Ribosome maturation factor RimP of Cupriavidus taiwanensis (strain DSM 17343 / BCRC 17206 / CCUG 44338 / CIP 107171 / LMG 19424 / R1) (Ralstonia taiwanensis (strain LMG 19424)).